The sequence spans 335 residues: Holliday junction branch migration complex subunit RuvB (335 aa).

Residues 1-183 form a large ATPase domain (RuvB-L) region; the sequence is MDERIISSET…FGVIDHLEFY (183 aa). ATP contacts are provided by residues L22, R23, G64, K67, T68, T69, 130–132, R173, Y183, and R220; that span reads EDY. T68 provides a ligand contact to Mg(2+). The segment at 184-254 is small ATPAse domain (RuvB-S); it reads TEEQLTEIVL…LAKEALTLLQ (71 aa). The tract at residues 257–335 is head domain (RuvB-H); the sequence is PRGLDTIDQK…HLGISYEKEV (79 aa). The DNA site is built by R293, R312, and R317.

It belongs to the RuvB family. In terms of assembly, homohexamer. Forms an RuvA(8)-RuvB(12)-Holliday junction (HJ) complex. HJ DNA is sandwiched between 2 RuvA tetramers; dsDNA enters through RuvA and exits via RuvB. An RuvB hexamer assembles on each DNA strand where it exits the tetramer. Each RuvB hexamer is contacted by two RuvA subunits (via domain III) on 2 adjacent RuvB subunits; this complex drives branch migration. In the full resolvosome a probable DNA-RuvA(4)-RuvB(12)-RuvC(2) complex forms which resolves the HJ.

Its subcellular location is the cytoplasm. The enzyme catalyses ATP + H2O = ADP + phosphate + H(+). In terms of biological role, the RuvA-RuvB-RuvC complex processes Holliday junction (HJ) DNA during genetic recombination and DNA repair, while the RuvA-RuvB complex plays an important role in the rescue of blocked DNA replication forks via replication fork reversal (RFR). RuvA specifically binds to HJ cruciform DNA, conferring on it an open structure. The RuvB hexamer acts as an ATP-dependent pump, pulling dsDNA into and through the RuvAB complex. RuvB forms 2 homohexamers on either side of HJ DNA bound by 1 or 2 RuvA tetramers; 4 subunits per hexamer contact DNA at a time. Coordinated motions by a converter formed by DNA-disengaged RuvB subunits stimulates ATP hydrolysis and nucleotide exchange. Immobilization of the converter enables RuvB to convert the ATP-contained energy into a lever motion, pulling 2 nucleotides of DNA out of the RuvA tetramer per ATP hydrolyzed, thus driving DNA branch migration. The RuvB motors rotate together with the DNA substrate, which together with the progressing nucleotide cycle form the mechanistic basis for DNA recombination by continuous HJ branch migration. Branch migration allows RuvC to scan DNA until it finds its consensus sequence, where it cleaves and resolves cruciform DNA. The protein is Holliday junction branch migration complex subunit RuvB of Listeria monocytogenes serovar 1/2a (strain ATCC BAA-679 / EGD-e).